Here is a 90-residue protein sequence, read N- to C-terminus: Large ribosomal subunit protein bL31 (90 aa).

The interval 71–90 is disordered; sequence KVKKFPSNADNQKEPAEEQE. The span at 81–90 shows a compositional bias: basic and acidic residues; sequence NQKEPAEEQE.

The protein belongs to the bacterial ribosomal protein bL31 family. Type A subfamily. In terms of assembly, part of the 50S ribosomal subunit.

Binds the 23S rRNA. The sequence is that of Large ribosomal subunit protein bL31 (rpmE) from Aster yellows witches'-broom phytoplasma (strain AYWB).